The primary structure comprises 632 residues: uncharacterized protein (632 aa).

The next 4 helical transmembrane spans lie at 255 to 275 (LFYA…ELRV), 506 to 526 (IALL…LTSI), 566 to 586 (MIFA…SMVF), and 603 to 623 (IVVI…AVLF).

The protein localises to the cell membrane. This is an uncharacterized protein from Mycoplasma pneumoniae (strain ATCC 29342 / M129 / Subtype 1) (Mycoplasmoides pneumoniae).